The chain runs to 115 residues: Large ribosomal subunit protein bL19 (115 aa).

The protein belongs to the bacterial ribosomal protein bL19 family.

Its function is as follows. This protein is located at the 30S-50S ribosomal subunit interface and may play a role in the structure and function of the aminoacyl-tRNA binding site. The polypeptide is Large ribosomal subunit protein bL19 (Nitratidesulfovibrio vulgaris (strain DSM 19637 / Miyazaki F) (Desulfovibrio vulgaris)).